The sequence spans 294 residues: Mitochondrial substrate carrier family protein ucpB (294 aa).

Topologically, residues 1 to 10 (MTSQESIGIK) are mitochondrial intermembrane. Solcar repeat units follow at residues 9-93 (IKFL…IKNY), 101-187 (TNLL…IKHM), and 197-288 (DGLQ…LRKV). The helical transmembrane segment at 11 to 31 (FLFGGLSCMGAAVVSNPVDVL) threads the bilayer. The Mitochondrial matrix segment spans residues 32–67 (KTRFQIHGEGIDSKSLGLVNGTIKIIKNEGISAMYK). A helical membrane pass occupies residues 68-88 (GLTPSLLREATYSTLRMGGYD). Residues 89-106 (VIKNYFIDSNGKTNLLSK) lie on the Mitochondrial intermembrane side of the membrane. The helical transmembrane segment at 107–127 (VTSGALSGALGACITSPTDLI) threads the bilayer. Over 128–161 (KVRMQASSKGVKYDSISSAFKEIIAKEGIKGLWK) the chain is Mitochondrial matrix. The chain crosses the membrane as a helical span at residues 162 to 182 (GVGPTTQRAALLTASQIPSYD). Topologically, residues 183-192 (HIKHMILDHG) are mitochondrial intermembrane. A helical transmembrane segment spans residues 193–213 (IIQVDGLQVHIVSSIFAGLIA). At 214–267 (SITTSPVDLVKTRIMNQPFDSNGVGLIYKSSYDCFKKTFQSEGISGLYKGFLPN) the chain is on the mitochondrial matrix side. A helical membrane pass occupies residues 268–285 (WFRIGPHTIVTFILYEYL). The Mitochondrial intermembrane segment spans residues 286 to 294 (RKVSGIKPI).

This sequence belongs to the mitochondrial carrier (TC 2.A.29) family.

The protein resides in the mitochondrion inner membrane. Its function is as follows. Mitochondrial solute carriers shuttle metabolites, nucleotides, and cofactors through the mitochondrial inner membrane. In Dictyostelium discoideum (Social amoeba), this protein is Mitochondrial substrate carrier family protein ucpB (ucpB).